Reading from the N-terminus, the 335-residue chain is Fructose-1,6-bisphosphatase class 1 (335 aa).

Positions 92, 114, 116, and 117 each coordinate Mg(2+). Residues 117 to 120, Asn-210, Tyr-242, and Lys-274 each bind substrate; that span reads DGSS. Mg(2+) is bound at residue Glu-280.

It belongs to the FBPase class 1 family. As to quaternary structure, homotetramer. Mg(2+) serves as cofactor.

It localises to the cytoplasm. It catalyses the reaction beta-D-fructose 1,6-bisphosphate + H2O = beta-D-fructose 6-phosphate + phosphate. It participates in carbohydrate biosynthesis; gluconeogenesis. The polypeptide is Fructose-1,6-bisphosphatase class 1 (Lawsonia intracellularis (strain PHE/MN1-00)).